The following is a 219-amino-acid chain: HTH-type transcriptional activator FasR (219 aa).

Residues M1–E30 form a disordered region. Residues D29–L89 enclose the HTH tetR-type domain. A DNA-binding region (H-T-H motif) is located at residues G52–F71.

Homodimer.

With respect to regulation, fasR:DNA binding is regulated by long-chain acyl-CoAs (C14- to C26-CoA), which act as effector molecules that modulate the affinity of FasR for its DNA binding sequences and therefore modulate the expression of the essential fas-acpS operon. Transcriptional activator that plays a central role in sensing mycobacterial long-chain fatty acids and regulating lipid biosynthesis. Activates the expression of the genes encoding the fatty acid synthase (fas) and the 4-phosphopantetheinyl transferase (acpS), whose products are involved in the fatty acid and mycolic acid biosynthesis. Specifically binds to three conserved operator sequences present in the fas-acpS promoter region. Essential for M.smegmatis viability. This is HTH-type transcriptional activator FasR from Mycolicibacterium smegmatis (strain ATCC 700084 / mc(2)155) (Mycobacterium smegmatis).